The sequence spans 673 residues: Methionine--tRNA ligase (673 aa).

The short motif at 13–23 (PYTNGFCHLGH) is the 'HIGH' region element. The Zn(2+) site is built by Cys144, Cys147, Cys156, and Cys160. Residues 325-329 (KFSKS) carry the 'KMSKS' region motif. Lys328 is a binding site for ATP. A tRNA-binding domain is found at 575–673 (DVAKLDLRVG…KDVPEGTKVH (99 aa)).

It belongs to the class-I aminoacyl-tRNA synthetase family. MetG type 1 subfamily. Homodimer. Zn(2+) serves as cofactor.

Its subcellular location is the cytoplasm. The enzyme catalyses tRNA(Met) + L-methionine + ATP = L-methionyl-tRNA(Met) + AMP + diphosphate. Its function is as follows. Is required not only for elongation of protein synthesis but also for the initiation of all mRNA translation through initiator tRNA(fMet) aminoacylation. This is Methionine--tRNA ligase from Methanocorpusculum labreanum (strain ATCC 43576 / DSM 4855 / Z).